The sequence spans 132 residues: Phosphoribosyl-AMP cyclohydrolase (132 aa).

Asp85 provides a ligand contact to Mg(2+). Cys86 is a Zn(2+) binding site. Mg(2+) contacts are provided by Asp87 and Asp89. Zn(2+) contacts are provided by Cys102 and Cys109.

It belongs to the PRA-CH family. Homodimer. Mg(2+) serves as cofactor. The cofactor is Zn(2+).

The protein localises to the cytoplasm. The catalysed reaction is 1-(5-phospho-beta-D-ribosyl)-5'-AMP + H2O = 1-(5-phospho-beta-D-ribosyl)-5-[(5-phospho-beta-D-ribosylamino)methylideneamino]imidazole-4-carboxamide. Its pathway is amino-acid biosynthesis; L-histidine biosynthesis; L-histidine from 5-phospho-alpha-D-ribose 1-diphosphate: step 3/9. Catalyzes the hydrolysis of the adenine ring of phosphoribosyl-AMP. This is Phosphoribosyl-AMP cyclohydrolase from Frankia alni (strain DSM 45986 / CECT 9034 / ACN14a).